Here is a 347-residue protein sequence, read N- to C-terminus: UPF0284 protein SSO2213 (347 aa).

It belongs to the UPF0284 family.

In Saccharolobus solfataricus (strain ATCC 35092 / DSM 1617 / JCM 11322 / P2) (Sulfolobus solfataricus), this protein is UPF0284 protein SSO2213.